The chain runs to 583 residues: MSDEEDYAEYMMSEEDMSSFEMDVDSDVEPDDAGLEQDQQVTGDDYDGSAGNSGDSMAAVEKQCESWYDTGKAFKNDDQFEEARKWFMKCHASPIWWFKSLKQIIKSDLSQGLRVNERLREMFELVSTKKEMIGEESYIYGSVKRLINRIVPDLNSHLLFTERLRQSSIDVSTLMERQRYLDILEKSVADMDQELRDLVTIRKIVYCVWIHVLRWEQIPKETLEDLHENVNLETYFILLQLHVRTFVDEDIVHLIELVKVVDEMGRFMTNSLSVSQIPTVTSVYHFARFLTLWKSTDHYNQSQMLSKCEGELTSCFQDLEAIGGTERDGLMLTRFSLMGIVFCHLLLNDKTKLVPFELEQIKVLEADELVVLLQELYQCWLDMDIYALEQCLLQLEDFYSPWYNVMIEKIIALCQSNKLWKRIAPTYSCIALQDLMAKLETGNTITMNRDQLLTLLMKSIAKDTADVYYKLDLVEDYVYFGEEYFVPLRSEELNIVNPLSQQMGSEIIGKDEWLCNVSNWHKPKVPKKLSAIEFMDYMKAARVTISQTNLAHHEPTVTSFLLKLSTITHAQLTQNSSSLASTN.

Residues 1–35 show a composition bias toward acidic residues; the sequence is MSDEEDYAEYMMSEEDMSSFEMDVDSDVEPDDAGL. The disordered stretch occupies residues 1–55; the sequence is MSDEEDYAEYMMSEEDMSSFEMDVDSDVEPDDAGLEQDQQVTGDDYDGSAGNSGD. Positions 297–485 constitute a PCI domain; the sequence is DHYNQSQMLS…DYVYFGEEYF (189 aa).

As to quaternary structure, component of a COP9 signalosome-like (CSN) complex.

It localises to the cytoplasm. Its subcellular location is the nucleus. In terms of biological role, component of the COP9 signalosome (CSN) complex that acts as an regulator of the ubiquitin (Ubl) conjugation pathway by mediating the deneddylation of the cullin subunit of SCF-type E3 ubiquitin-protein ligase complexes. The CSN complex is involved in the regulation of the mating pheromone response. The protein is COP9 signalosome complex subunit 10 (RRI2) of Kluyveromyces lactis (strain ATCC 8585 / CBS 2359 / DSM 70799 / NBRC 1267 / NRRL Y-1140 / WM37) (Yeast).